The following is a 185-amino-acid chain: PXMP2/4 family protein 4 (185 aa).

Helical transmembrane passes span 63-83 (MAVF…KYLD), 100-120 (IDQV…MGIL), and 141-161 (VSDC…ISSI).

This sequence belongs to the peroxisomal membrane protein PXMP2/4 family.

The protein localises to the membrane. The protein is PXMP2/4 family protein 4 of Dictyostelium discoideum (Social amoeba).